The following is a 378-amino-acid chain: tRNA-specific 2-thiouridylase MnmA (378 aa).

ATP-binding positions include 6–13 (AMSGGVDS) and Leu32. Cys101 serves as the catalytic Nucleophile. A disulfide bridge connects residues Cys101 and Cys199. Gly125 provides a ligand contact to ATP. Residues 148–150 (KDQ) form an interaction with tRNA region. Catalysis depends on Cys199, which acts as the Cysteine persulfide intermediate.

This sequence belongs to the MnmA/TRMU family.

The protein resides in the cytoplasm. It carries out the reaction S-sulfanyl-L-cysteinyl-[protein] + uridine(34) in tRNA + AH2 + ATP = 2-thiouridine(34) in tRNA + L-cysteinyl-[protein] + A + AMP + diphosphate + H(+). Its function is as follows. Catalyzes the 2-thiolation of uridine at the wobble position (U34) of tRNA, leading to the formation of s(2)U34. The protein is tRNA-specific 2-thiouridylase MnmA of Micrococcus luteus (strain ATCC 4698 / DSM 20030 / JCM 1464 / CCM 169 / CCUG 5858 / IAM 1056 / NBRC 3333 / NCIMB 9278 / NCTC 2665 / VKM Ac-2230) (Micrococcus lysodeikticus).